The following is a 93-amino-acid chain: Parbolysin P3 (93 aa).

Disulfide bonds link C16–C37, C22–C33, and C47–C60.

Belongs to the worm cytolysin family. In terms of tissue distribution, localized within the skin and proboscis and are most readily isolated from body mucus secretions.

The protein localises to the secreted. In terms of biological role, cytolysin that shows hemolytic activity (on bovine erythrocytes, HC(50)=5.75 mg/ml). This hemolytic activity is completely inhibited by small unilamelar vesicles composed of PC/PG, PC/PI and PC/PS in 1:1 molar ratios (with at least 100 mg/ml concentration). The protein is Parbolysin P3 of Parborlasia corrugatus (Antarctic nemertean worm).